The following is a 363-amino-acid chain: 3-dehydroquinate synthase (363 aa).

Residues aspartate 75–lysine 80, glycine 109–aspartate 113, threonine 133–serine 134, lysine 146, lysine 155, and threonine 173–threonine 176 each bind NAD(+). Zn(2+) contacts are provided by glutamate 188, histidine 251, and histidine 267.

The protein belongs to the sugar phosphate cyclases superfamily. Dehydroquinate synthase family. The cofactor is Co(2+). It depends on Zn(2+) as a cofactor. NAD(+) serves as cofactor.

The protein resides in the cytoplasm. It carries out the reaction 7-phospho-2-dehydro-3-deoxy-D-arabino-heptonate = 3-dehydroquinate + phosphate. It functions in the pathway metabolic intermediate biosynthesis; chorismate biosynthesis; chorismate from D-erythrose 4-phosphate and phosphoenolpyruvate: step 2/7. Its function is as follows. Catalyzes the conversion of 3-deoxy-D-arabino-heptulosonate 7-phosphate (DAHP) to dehydroquinate (DHQ). The sequence is that of 3-dehydroquinate synthase from Arthrobacter sp. (strain FB24).